The following is a 201-amino-acid chain: Proteasome subunit beta type-2 (201 aa).

An N-acetylmethionine modification is found at Met-1.

This sequence belongs to the peptidase T1B family. As to quaternary structure, the 26S proteasome consists of a 20S proteasome core and two 19S regulatory subunits. The 20S proteasome core is a barrel-shaped complex made of 28 subunits that are arranged in four stacked rings. The two outer rings are each formed by seven alpha subunits, and the two inner rings are formed by seven beta subunits. The proteolytic activity is exerted by three beta-subunits PSMB5, PSMB6 and PSMB7.

The protein resides in the cytoplasm. Its subcellular location is the nucleus. Its function is as follows. Non-catalytic component of the 20S core proteasome complex involved in the proteolytic degradation of most intracellular proteins. This complex plays numerous essential roles within the cell by associating with different regulatory particles. Associated with two 19S regulatory particles, forms the 26S proteasome and thus participates in the ATP-dependent degradation of ubiquitinated proteins. The 26S proteasome plays a key role in the maintenance of protein homeostasis by removing misfolded or damaged proteins that could impair cellular functions, and by removing proteins whose functions are no longer required. Associated with the PA200 or PA28, the 20S proteasome mediates ubiquitin-independent protein degradation. This type of proteolysis is required in several pathways including spermatogenesis (20S-PA200 complex) or generation of a subset of MHC class I-presented antigenic peptides (20S-PA28 complex). The chain is Proteasome subunit beta type-2 (PSMB2) from Bos taurus (Bovine).